We begin with the raw amino-acid sequence, 546 residues long: MSLSQNAPKSKGIKREELKKQYEDVEDEEEIGSDDDLTRGKRRKTEKEKQKLEESELVEMKKLENLIFGSLYSPVTFGKEEEEDGSALFHVDRSAVRQIPDYEDDGDDDEELSDEENGQVVAIRKGEAAWEDEEEKQINVDIASVNRLRKLRKEENEGLISGSEYIARLRAHHAKLNPGTDWARPDSQIVDGESSDDDDTQDGGVDDILRTNEDLVVKSRGNKLCAGRLEYSKLVDANAADPSNGPINSVHFHQNAQLLLTAGLDRRLRFFQIDGKRNTKIQSIFLEDCPIRKAAFLPNGSQVIVSGRRKFFYSFDLEKAKFDKIGPLVGREEKSLEYFEVSQDSNTIAFVGNEGYILLVSTKTKELIGTLKMNGSVRSLAFSEDGKHLLSSGGDGQVYVWDLRTMKCLYKGVDEGSTCGTSLCSSLNGALFASGTDRGIVNIYKKSEFVGGKRKPIKTVDNLTSKIDFMKFNHDAQILAIVSTMNKNSVKLVHVPSLTVFSNWPPPNSTMHYPRCLDFSPGSGFMAMGNAAGKVLLYKLHHYQNA.

Disordered regions lie at residues 1 to 55 (MSLS…LEES), 94 to 118 (SAVR…EENG), and 177 to 205 (NPGT…DGGV). Positions 13-23 (IKREELKKQYE) are enriched in basic and acidic residues. Positions 24 to 35 (DVEDEEEIGSDD) are enriched in acidic residues. Serine 33 is subject to Phosphoserine. Basic and acidic residues predominate over residues 45-55 (TEKEKQKLEES). 2 stretches are compositionally biased toward acidic residues: residues 101–117 (DYED…DEEN) and 193–205 (ESSD…DGGV). WD repeat units lie at residues 242–281 (PSNG…NTKI), 372–411 (KMNG…CLYK), 413–454 (VDEG…GGKR), and 509–545 (STMH…HYQN). Positions 389-404 (LLSSGGDGQVYVWDLR) match the DWD box motif.

The protein belongs to the WD repeat UTP18 family.

It is found in the nucleus. Its subcellular location is the nucleolus. Involved in nucleolar processing of pre-18S ribosomal RNA. The protein is U3 small nucleolar RNA-associated protein 18 homolog of Arabidopsis thaliana (Mouse-ear cress).